An 89-amino-acid chain; its full sequence is Small ribosomal subunit protein uS15 (89 aa).

Over residues 1 to 10 the composition is skewed to basic and acidic residues; sequence MPLNTEKKQE. The segment at 1–22 is disordered; it reads MPLNTEKKQELINSHQTHATDT. Residues 11–22 are compositionally biased toward polar residues; sequence LINSHQTHATDT.

Belongs to the universal ribosomal protein uS15 family. In terms of assembly, part of the 30S ribosomal subunit. Forms a bridge to the 50S subunit in the 70S ribosome, contacting the 23S rRNA.

Functionally, one of the primary rRNA binding proteins, it binds directly to 16S rRNA where it helps nucleate assembly of the platform of the 30S subunit by binding and bridging several RNA helices of the 16S rRNA. In terms of biological role, forms an intersubunit bridge (bridge B4) with the 23S rRNA of the 50S subunit in the ribosome. In Synechococcus sp. (strain RCC307), this protein is Small ribosomal subunit protein uS15.